Reading from the N-terminus, the 509-residue chain is 2-isopropylmalate synthase (509 aa).

Positions 5 to 267 (IQIFDTTLRD…QTALNLEETK (263 aa)) constitute a Pyruvate carboxyltransferase domain. Mn(2+) is bound by residues aspartate 14, histidine 202, histidine 204, and asparagine 238. The regulatory domain stretch occupies residues 391–509 (KLETLQLQYV…AAENVEKVGN (119 aa)).

It belongs to the alpha-IPM synthase/homocitrate synthase family. LeuA type 1 subfamily. As to quaternary structure, homodimer. The cofactor is Mn(2+).

Its subcellular location is the cytoplasm. The catalysed reaction is 3-methyl-2-oxobutanoate + acetyl-CoA + H2O = (2S)-2-isopropylmalate + CoA + H(+). It participates in amino-acid biosynthesis; L-leucine biosynthesis; L-leucine from 3-methyl-2-oxobutanoate: step 1/4. Catalyzes the condensation of the acetyl group of acetyl-CoA with 3-methyl-2-oxobutanoate (2-ketoisovalerate) to form 3-carboxy-3-hydroxy-4-methylpentanoate (2-isopropylmalate). This chain is 2-isopropylmalate synthase, found in Staphylococcus aureus (strain USA300).